A 785-amino-acid chain; its full sequence is Protein kintoun (785 aa).

Composition is skewed to basic and acidic residues over residues 622 to 638 (EHNEQCTDHSESERDTS) and 662 to 679 (HNIELGREHTSERDKEPK). Disordered regions lie at residues 622–698 (EHNE…DSHL) and 719–749 (KSSVQTTQESDLDEDDMPDNSDHLQNSASSN). The span at 681–695 (TSCTAESTSGQQPND) shows a compositional bias: polar residues. Over residues 728–737 (SDLDEDDMPD) the composition is skewed to acidic residues.

Belongs to the PIH1 family. Kintoun subfamily.

Its subcellular location is the cytoplasm. It is found in the dynein axonemal particle. In terms of biological role, required for cytoplasmic pre-assembly of axonemal dyneins, thereby playing a central role in motility in cilia and flagella. Involved in pre-assembly of dynein arm complexes in the cytoplasm before intraflagellar transport loads them for the ciliary compartment. This chain is Protein kintoun, found in Xenopus tropicalis (Western clawed frog).